A 493-amino-acid polypeptide reads, in one-letter code: Cytochrome P450 2E1 (493 aa).

Phe298 to Thr303 contributes to the substrate binding site. Cys437 contributes to the heme binding site.

The protein belongs to the cytochrome P450 family. Interacts with chaperones HSP70 and HSP90; this interaction is required for initial targeting to mitochondria. The cofactor is heme.

The protein resides in the endoplasmic reticulum membrane. It is found in the microsome membrane. The protein localises to the mitochondrion inner membrane. The catalysed reaction is an organic molecule + reduced [NADPH--hemoprotein reductase] + O2 = an alcohol + oxidized [NADPH--hemoprotein reductase] + H2O + H(+). It carries out the reaction (5Z,8Z,11Z)-eicosatrienoate + reduced [NADPH--hemoprotein reductase] + O2 = 19-hydroxy-(5Z,8Z,11Z)-eicosatrienoate + oxidized [NADPH--hemoprotein reductase] + H2O + H(+). The enzyme catalyses (5Z,8Z,11Z,14Z,17Z)-eicosapentaenoate + reduced [NADPH--hemoprotein reductase] + O2 = 19-hydroxy-(5Z,8Z,11Z,14Z,17Z)-eicosapentaenoate + oxidized [NADPH--hemoprotein reductase] + H2O + H(+). It catalyses the reaction (4Z,7Z,10Z,13Z,16Z,19Z)-docosahexaenoate + reduced [NADPH--hemoprotein reductase] + O2 = 21-hydroxy-(4Z,7Z,10Z,13Z,16Z,19Z)-docosahexaenoate + oxidized [NADPH--hemoprotein reductase] + H2O + H(+). The catalysed reaction is dodecanoate + reduced [NADPH--hemoprotein reductase] + O2 = 11-hydroxydodecanoate + oxidized [NADPH--hemoprotein reductase] + H2O + H(+). It carries out the reaction tetradecanoate + reduced [NADPH--hemoprotein reductase] + O2 = 13-hydroxytetradecanoate + oxidized [NADPH--hemoprotein reductase] + H2O + H(+). The enzyme catalyses 4-nitrophenol + NADPH + O2 + H(+) = 4-nitrocatechol + NADP(+) + H2O. It functions in the pathway lipid metabolism; fatty acid metabolism. Its activity is regulated as follows. The omega-1 hydroxylase activity is stimulated by cytochrome b5. A cytochrome P450 monooxygenase involved in the metabolism of fatty acids. Mechanistically, uses molecular oxygen inserting one oxygen atom into a substrate, and reducing the second into a water molecule, with two electrons provided by NADPH via cytochrome P450 reductase (NADPH--hemoprotein reductase). Catalyzes the hydroxylation of carbon-hydrogen bonds. Hydroxylates fatty acids specifically at the omega-1 position displaying the highest catalytic activity for saturated fatty acids. May be involved in the oxidative metabolism of xenobiotics. The polypeptide is Cytochrome P450 2E1 (Rattus norvegicus (Rat)).